The sequence spans 478 residues: Uronate isomerase (478 aa).

It belongs to the metallo-dependent hydrolases superfamily. Uronate isomerase family.

It carries out the reaction D-glucuronate = D-fructuronate. The catalysed reaction is aldehydo-D-galacturonate = keto-D-tagaturonate. It participates in carbohydrate metabolism; pentose and glucuronate interconversion. The sequence is that of Uronate isomerase from Bacillus pumilus (strain SAFR-032).